We begin with the raw amino-acid sequence, 253 residues long: Succinate dehydrogenase [ubiquinone] iron-sulfur subunit, mitochondrial (253 aa).

Positions 23–114 (FKIYRWNPDK…TTKIYPLPHM (92 aa)) constitute a 2Fe-2S ferredoxin-type domain. [2Fe-2S] cluster contacts are provided by Cys-74, Cys-79, Cys-82, and Cys-94. Positions 156-186 (DRKKLDGLYECILCACCSTSCPSYWWNQEEY) constitute a 4Fe-4S ferredoxin-type domain. Cys-166, Cys-169, and Cys-172 together coordinate [4Fe-4S] cluster. Cys-176 provides a ligand contact to [3Fe-4S] cluster. Trp-181 lines the a ubiquinone pocket. [3Fe-4S] cluster contacts are provided by Cys-223 and Cys-229. Cys-233 is a [4Fe-4S] cluster binding site.

It belongs to the succinate dehydrogenase/fumarate reductase iron-sulfur protein family. In terms of assembly, component of complex II composed of four subunits: a flavoprotein (FP), an iron-sulfur protein (IP), and a cytochrome b composed of a large and a small subunit. [2Fe-2S] cluster is required as a cofactor. The cofactor is [3Fe-4S] cluster. Requires [4Fe-4S] cluster as cofactor.

It is found in the mitochondrion inner membrane. The catalysed reaction is a quinone + succinate = fumarate + a quinol. It participates in carbohydrate metabolism; tricarboxylic acid cycle; fumarate from succinate (eukaryal route): step 1/1. Its function is as follows. Iron-sulfur protein (IP) subunit of succinate dehydrogenase (SDH) that is involved in complex II of the mitochondrial electron transport chain and is responsible for transferring electrons from succinate to ubiquinone (coenzyme Q). This chain is Succinate dehydrogenase [ubiquinone] iron-sulfur subunit, mitochondrial (SDH2), found in Candida glabrata (strain ATCC 2001 / BCRC 20586 / JCM 3761 / NBRC 0622 / NRRL Y-65 / CBS 138) (Yeast).